We begin with the raw amino-acid sequence, 336 residues long: Anthranilate phosphoribosyltransferase (336 aa).

Residues glycine 79, 82–83, threonine 87, 89–92, 107–115, and serine 119 contribute to the 5-phospho-alpha-D-ribose 1-diphosphate site; these read GD, NIST, and KHGNRAMSS. Glycine 79 lines the anthranilate pocket. Position 91 (serine 91) interacts with Mg(2+). Asparagine 110 is an anthranilate binding site. Residue arginine 165 coordinates anthranilate. Mg(2+) contacts are provided by aspartate 225 and glutamate 226.

It belongs to the anthranilate phosphoribosyltransferase family. As to quaternary structure, homodimer. Mg(2+) serves as cofactor.

The enzyme catalyses N-(5-phospho-beta-D-ribosyl)anthranilate + diphosphate = 5-phospho-alpha-D-ribose 1-diphosphate + anthranilate. The protein operates within amino-acid biosynthesis; L-tryptophan biosynthesis; L-tryptophan from chorismate: step 2/5. Catalyzes the transfer of the phosphoribosyl group of 5-phosphorylribose-1-pyrophosphate (PRPP) to anthranilate to yield N-(5'-phosphoribosyl)-anthranilate (PRA). In Dictyoglomus thermophilum (strain ATCC 35947 / DSM 3960 / H-6-12), this protein is Anthranilate phosphoribosyltransferase.